An 891-amino-acid chain; its full sequence is DNA mismatch repair protein MutS (891 aa).

634–641 (GPNMGGKS) serves as a coordination point for ATP.

It belongs to the DNA mismatch repair MutS family.

This protein is involved in the repair of mismatches in DNA. It is possible that it carries out the mismatch recognition step. This protein has a weak ATPase activity. The polypeptide is DNA mismatch repair protein MutS (Burkholderia pseudomallei (strain 668)).